The chain runs to 523 residues: Anthranilate synthase component 1 (523 aa).

L-tryptophan contacts are provided by residues Ser-45 and 296 to 298; that span reads PYM. Residue 333-334 coordinates chorismate; it reads GT. Mg(2+) is bound at residue Glu-366. Residues Tyr-454, Arg-474, 488-490, and Gly-490 contribute to the chorismate site; that span reads GAG. Glu-503 serves as a coordination point for Mg(2+).

Belongs to the anthranilate synthase component I family. Heterotetramer consisting of two non-identical subunits: a beta subunit (TrpG) and a large alpha subunit (TrpE). Mg(2+) is required as a cofactor.

It carries out the reaction chorismate + L-glutamine = anthranilate + pyruvate + L-glutamate + H(+). It participates in amino-acid biosynthesis; L-tryptophan biosynthesis; L-tryptophan from chorismate: step 1/5. Feedback inhibited by tryptophan. Functionally, part of a heterotetrameric complex that catalyzes the two-step biosynthesis of anthranilate, an intermediate in the biosynthesis of L-tryptophan. In the first step, the glutamine-binding beta subunit (TrpG) of anthranilate synthase (AS) provides the glutamine amidotransferase activity which generates ammonia as a substrate that, along with chorismate, is used in the second step, catalyzed by the large alpha subunit of AS (TrpE) to produce anthranilate. In the absence of TrpG, TrpE can synthesize anthranilate directly from chorismate and high concentrations of ammonia. The polypeptide is Anthranilate synthase component 1 (trpE) (Vibrio cholerae serotype O1 (strain ATCC 39315 / El Tor Inaba N16961)).